Consider the following 203-residue polypeptide: Dual-action ribosomal maturation protein DarP (203 aa).

Disordered regions lie at residues 1–31 (MTRK…SQLK) and 178–203 (NADG…DRDA). Positions 21–31 (GYDRPSKSQLK) are enriched in basic and acidic residues. Acidic residues predominate over residues 188–203 (SEADDAQDDEDDDRDA).

Belongs to the DarP family.

It is found in the cytoplasm. Functionally, member of a network of 50S ribosomal subunit biogenesis factors which assembles along the 30S-50S interface, preventing incorrect 23S rRNA structures from forming. Promotes peptidyl transferase center (PTC) maturation. In Paraburkholderia xenovorans (strain LB400), this protein is Dual-action ribosomal maturation protein DarP.